Consider the following 466-residue polypeptide: MEALKTATFSPMSVLSEKRSEPRKPFSLPNLFPPKSQRPISQESFLKRFNGGLALLTSVLSSATAPAKSLTYEEALQQSMTTSSSFDSDGLIEGISNFVTDNPLVIAGGVAALAVPFVLSQVLNKKPKSWGVESAKNAYTKLGTDDNAQLLDIRATADFRQVGSPNIKGLGKKAVSTVYNGEDKPGFLKKLSLKFKDPENTTLYILDKFDGNSELVAELVALNGFKSAYAIKDGAEGPRGWLNSSLPWIEPKKTLSLDLSSLTDSISGVFGESSDGVSVALGVAAAAGLSVFAFTEIETILQLLGSAALVQLAGKKLLFAEDRKQTLKQVDEFLNTKVAPKELVDELKEIGKALLPQSTSNKALPAPATVTAEAESATATTTTVDKPVPEPETVAATTTTVDKPVPEPEPVPEPVPVPAIEAAVAAQVITEPTETEAKPKPHSRPLSPYASYPDLKPPSSPMPSQP.

Residues 1-15 constitute a chloroplast transit peptide; sequence MEALKTATFSPMSVL. A disordered region spans residues 1–35; the sequence is MEALKTATFSPMSVLSEKRSEPRKPFSLPNLFPPK. The N-terminal 54 residues, 16–69, are a transit peptide targeting the thylakoid; it reads SEKRSEPRKPFSLPNLFPPKSQRPISQESFLKRFNGGLALLTSVLSSATAPAKS. A helical transmembrane segment spans residues 103 to 123; the sequence is PLVIAGGVAALAVPFVLSQVL. Positions 144-250 constitute a Rhodanese domain; sequence TDDNAQLLDI…WLNSSLPWIE (107 aa). A helical membrane pass occupies residues 277-297; it reads VSVALGVAAAAGLSVFAFTEI. The span at 373–384 shows a compositional bias: low complexity; it reads EAESATATTTTV. Disordered stretches follow at residues 373 to 392 and 426 to 466; these read EAES…PEPE and AQVI…PSQP. The segment covering 455–466 has biased composition (pro residues); that stretch reads LKPPSSPMPSQP.

Component of high molecular weight thylakoid LFNRs-containing protein complexes containing LIR1, LFNR1, LFNR2, TIC62 and TROL proteins. Expressed in leaves and stems, and at lower levels in flowers and siliques (at protein level).

It localises to the plastid. Its subcellular location is the chloroplast envelope. The protein localises to the chloroplast thylakoid membrane. Its function is as follows. Rhodanese domain-containing protein required for anchoring ferredoxin--NADP reductase to the thylakoid membranes and sustaining efficient linear electron flow (LEF). This is Rhodanese-like domain-containing protein 4, chloroplastic from Arabidopsis thaliana (Mouse-ear cress).